A 149-amino-acid polypeptide reads, in one-letter code: Endoribonuclease YbeY (149 aa).

3 residues coordinate Zn(2+): His-116, His-120, and His-126.

This sequence belongs to the endoribonuclease YbeY family. Zn(2+) serves as cofactor.

The protein localises to the cytoplasm. In terms of biological role, single strand-specific metallo-endoribonuclease involved in late-stage 70S ribosome quality control and in maturation of the 3' terminus of the 16S rRNA. The chain is Endoribonuclease YbeY from Nocardioides sp. (strain ATCC BAA-499 / JS614).